Reading from the N-terminus, the 522-residue chain is Maturase K (522 aa).

It belongs to the intron maturase 2 family. MatK subfamily.

Its subcellular location is the plastid. It is found in the chloroplast. Its function is as follows. Usually encoded in the trnK tRNA gene intron. Probably assists in splicing its own and other chloroplast group II introns. This chain is Maturase K, found in Tigridia pavonia (Mexican shell flower).